Reading from the N-terminus, the 255-residue chain is Ribonuclease PH (255 aa).

Residues Arg86 and 124–126 (GTR) each bind phosphate.

It belongs to the RNase PH family. As to quaternary structure, homohexameric ring arranged as a trimer of dimers.

The catalysed reaction is tRNA(n+1) + phosphate = tRNA(n) + a ribonucleoside 5'-diphosphate. In terms of biological role, phosphorolytic 3'-5' exoribonuclease that plays an important role in tRNA 3'-end maturation. Removes nucleotide residues following the 3'-CCA terminus of tRNAs; can also add nucleotides to the ends of RNA molecules by using nucleoside diphosphates as substrates, but this may not be physiologically important. Probably plays a role in initiation of 16S rRNA degradation (leading to ribosome degradation) during starvation. The chain is Ribonuclease PH from Aquifex aeolicus (strain VF5).